The following is a 271-amino-acid chain: GATA transcription factor 19 (271 aa).

The interval 1-23 (MAAEPPADGRDPPADDGAAGDGA) is disordered. Residues 33–68 (LSAASEQLTLVYQGEVYVFDPVPPQKVQAVLLVLGG) form the Tify domain. The region spanning 95–137 (RIASLMRFREKRKERCFDKKIRYSVRKEVAQKMKRRKGQFAGR) is the CCT domain. Residues 166-193 (CQNCGISSRLTPAMRRGPAGPRSLCNAC) form a GATA-type zinc finger. The disordered stretch occupies residues 238 to 271 (NQTTMKTDTEMVPEQEQKADVLPPTKEEDSMATS). The segment covering 252-271 (QEQKADVLPPTKEEDSMATS) has biased composition (basic and acidic residues).

Belongs to the type IV zinc-finger family. Class C subfamily.

The protein resides in the nucleus. Its function is as follows. Transcriptional activator that specifically binds 5'-GATA-3' or 5'-GAT-3' motifs within gene promoters. The polypeptide is GATA transcription factor 19 (Oryza sativa subsp. indica (Rice)).